Reading from the N-terminus, the 396-residue chain is Ribosomal RNA large subunit methyltransferase I (396 aa).

In terms of domain architecture, PUA spans Ala-2–Phe-79.

It belongs to the methyltransferase superfamily. RlmI family.

The protein localises to the cytoplasm. It carries out the reaction cytidine(1962) in 23S rRNA + S-adenosyl-L-methionine = 5-methylcytidine(1962) in 23S rRNA + S-adenosyl-L-homocysteine + H(+). In terms of biological role, specifically methylates the cytosine at position 1962 (m5C1962) of 23S rRNA. The polypeptide is Ribosomal RNA large subunit methyltransferase I (Shewanella baltica (strain OS155 / ATCC BAA-1091)).